The chain runs to 354 residues: Dual-specificity RNA methyltransferase RlmN (354 aa).

Glu86 functions as the Proton acceptor in the catalytic mechanism. In terms of domain architecture, Radical SAM core spans 105 to 338 (RHARYTICVS…CTIRQSKGLD (234 aa)). Cys112 and Cys343 form a disulfide bridge. 3 residues coordinate [4Fe-4S] cluster: Cys119, Cys123, and Cys126. S-adenosyl-L-methionine is bound by residues 169–170 (GE), Ser201, 224–226 (SLH), and Asn300. Cys343 serves as the catalytic S-methylcysteine intermediate.

This sequence belongs to the radical SAM superfamily. RlmN family. [4Fe-4S] cluster serves as cofactor.

It localises to the cytoplasm. It carries out the reaction adenosine(2503) in 23S rRNA + 2 reduced [2Fe-2S]-[ferredoxin] + 2 S-adenosyl-L-methionine = 2-methyladenosine(2503) in 23S rRNA + 5'-deoxyadenosine + L-methionine + 2 oxidized [2Fe-2S]-[ferredoxin] + S-adenosyl-L-homocysteine. The catalysed reaction is adenosine(37) in tRNA + 2 reduced [2Fe-2S]-[ferredoxin] + 2 S-adenosyl-L-methionine = 2-methyladenosine(37) in tRNA + 5'-deoxyadenosine + L-methionine + 2 oxidized [2Fe-2S]-[ferredoxin] + S-adenosyl-L-homocysteine. Specifically methylates position 2 of adenine 2503 in 23S rRNA and position 2 of adenine 37 in tRNAs. m2A2503 modification seems to play a crucial role in the proofreading step occurring at the peptidyl transferase center and thus would serve to optimize ribosomal fidelity. This Campylobacter fetus subsp. fetus (strain 82-40) protein is Dual-specificity RNA methyltransferase RlmN.